The following is a 431-amino-acid chain: Adenylosuccinate synthetase (431 aa).

GTP contacts are provided by residues 13 to 19 (GDEGKGK) and 41 to 43 (GHT). Residue Asp14 is the Proton acceptor of the active site. 2 residues coordinate Mg(2+): Asp14 and Gly41. IMP is bound by residues 14–17 (DEGK), 39–42 (NAGH), Thr130, Arg144, Gln225, Thr240, and Arg306. Residue His42 is the Proton donor of the active site. Substrate is bound at residue 302-308 (ATTGRQR). GTP is bound by residues Arg308, 334-336 (KLD), and 416-418 (STG).

This sequence belongs to the adenylosuccinate synthetase family. In terms of assembly, homodimer. It depends on Mg(2+) as a cofactor.

The protein localises to the cytoplasm. The enzyme catalyses IMP + L-aspartate + GTP = N(6)-(1,2-dicarboxyethyl)-AMP + GDP + phosphate + 2 H(+). It functions in the pathway purine metabolism; AMP biosynthesis via de novo pathway; AMP from IMP: step 1/2. Functionally, plays an important role in the de novo pathway of purine nucleotide biosynthesis. Catalyzes the first committed step in the biosynthesis of AMP from IMP. The sequence is that of Adenylosuccinate synthetase from Halorhodospira halophila (strain DSM 244 / SL1) (Ectothiorhodospira halophila (strain DSM 244 / SL1)).